Here is a 203-residue protein sequence, read N- to C-terminus: Imidazole glycerol phosphate synthase subunit HisH (203 aa).

The 203-residue stretch at 1 to 203 (MIGIIDYGMG…KNFGEMIKCL (203 aa)) folds into the Glutamine amidotransferase type-1 domain. The active-site Nucleophile is the C79. Residues H181 and E183 contribute to the active site.

In terms of assembly, heterodimer of HisH and HisF.

The protein localises to the cytoplasm. It carries out the reaction 5-[(5-phospho-1-deoxy-D-ribulos-1-ylimino)methylamino]-1-(5-phospho-beta-D-ribosyl)imidazole-4-carboxamide + L-glutamine = D-erythro-1-(imidazol-4-yl)glycerol 3-phosphate + 5-amino-1-(5-phospho-beta-D-ribosyl)imidazole-4-carboxamide + L-glutamate + H(+). It catalyses the reaction L-glutamine + H2O = L-glutamate + NH4(+). It functions in the pathway amino-acid biosynthesis; L-histidine biosynthesis; L-histidine from 5-phospho-alpha-D-ribose 1-diphosphate: step 5/9. IGPS catalyzes the conversion of PRFAR and glutamine to IGP, AICAR and glutamate. The HisH subunit catalyzes the hydrolysis of glutamine to glutamate and ammonia as part of the synthesis of IGP and AICAR. The resulting ammonia molecule is channeled to the active site of HisF. In Caldanaerobacter subterraneus subsp. tengcongensis (strain DSM 15242 / JCM 11007 / NBRC 100824 / MB4) (Thermoanaerobacter tengcongensis), this protein is Imidazole glycerol phosphate synthase subunit HisH.